The following is a 451-amino-acid chain: Probable metal transport system membrane protein CT_069 (451 aa).

Helical transmembrane passes span 14 to 34 (SFLAVSLICMTTALWGTILLV), 38 to 58 (PLLSESLSHACYPGLLIGALL), 70 to 90 (WVIIFFGCLASVLGCLGISFL), 100 to 120 (SALCLVLVSFFGVGVILVSYV), 145 to 165 (TEAKLALIIFCLSAVVLWWWY), 192 to 212 (VLVFISLVIVSGVRSVGILLI), 233 to 253 (ILILSSIFGGICGALGCYFSV), and 269 to 289 (ILPTGPLVVFFAGVLVFLCLI). The interval 432–451 (PDYDPHQREIPKRTRKSDGC) is disordered. Over residues 434–451 (YDPHQREIPKRTRKSDGC) the composition is skewed to basic and acidic residues.

Belongs to the ABC-3 integral membrane protein family.

It localises to the cell inner membrane. Functionally, part of an ATP-driven transport system CT_067/CT_068/CT_069/CT_070 for a metal. The chain is Probable metal transport system membrane protein CT_069 from Chlamydia trachomatis serovar D (strain ATCC VR-885 / DSM 19411 / UW-3/Cx).